The chain runs to 100 residues: NAD(P)H-quinone oxidoreductase subunit 4L, chloroplastic (100 aa).

Helical transmembrane passes span 2–22 (ILQH…FGLI), 28–48 (VKIL…LVIF), and 61–81 (LFGL…LAIL).

Belongs to the complex I subunit 4L family. In terms of assembly, NDH is composed of at least 16 different subunits, 5 of which are encoded in the nucleus.

The protein localises to the plastid. Its subcellular location is the chloroplast thylakoid membrane. It carries out the reaction a plastoquinone + NADH + (n+1) H(+)(in) = a plastoquinol + NAD(+) + n H(+)(out). The catalysed reaction is a plastoquinone + NADPH + (n+1) H(+)(in) = a plastoquinol + NADP(+) + n H(+)(out). Its function is as follows. NDH shuttles electrons from NAD(P)H:plastoquinone, via FMN and iron-sulfur (Fe-S) centers, to quinones in the photosynthetic chain and possibly in a chloroplast respiratory chain. The immediate electron acceptor for the enzyme in this species is believed to be plastoquinone. Couples the redox reaction to proton translocation, and thus conserves the redox energy in a proton gradient. This is NAD(P)H-quinone oxidoreductase subunit 4L, chloroplastic from Chara vulgaris (Common stonewort).